Consider the following 206-residue polypeptide: Small ribosomal subunit protein uS4 (206 aa).

The disordered stretch occupies residues 18–46 (NIWGRPKSPVNRREYGPGQHGQRRKGKLS). The S4 RNA-binding domain maps to 94 to 156 (RRLDAVVYRA…SKQNVAVLEA (63 aa)).

This sequence belongs to the universal ribosomal protein uS4 family. Part of the 30S ribosomal subunit. Contacts protein S5. The interaction surface between S4 and S5 is involved in control of translational fidelity.

In terms of biological role, one of the primary rRNA binding proteins, it binds directly to 16S rRNA where it nucleates assembly of the body of the 30S subunit. Functionally, with S5 and S12 plays an important role in translational accuracy. The chain is Small ribosomal subunit protein uS4 from Ruegeria sp. (strain TM1040) (Silicibacter sp.).